Consider the following 562-residue polypeptide: NAD-dependent malic enzyme (562 aa).

Tyr101 (proton donor) is an active-site residue. Residue Arg154 coordinates NAD(+). The active-site Proton acceptor is the Lys172. Residues Glu243, Asp244, and Asp267 each coordinate a divalent metal cation. NAD(+)-binding residues include Asp267 and Asn415.

The protein belongs to the malic enzymes family. In terms of assembly, homotetramer. It depends on Mg(2+) as a cofactor. Mn(2+) is required as a cofactor.

The catalysed reaction is (S)-malate + NAD(+) = pyruvate + CO2 + NADH. It carries out the reaction oxaloacetate + H(+) = pyruvate + CO2. The sequence is that of NAD-dependent malic enzyme from Vibrio campbellii (strain ATCC BAA-1116).